The primary structure comprises 423 residues: MARKKIREYDSKRLVKEHFKRLSGQELPIRSVQINQETDLNELVEREPWLSSEKLVVKPDMLFGKRGKSGLVALNLDFADVATFVKERLGKEVEMSGCKGPITTFIVEPFVPHNEEFYLNIVSDRLGCSISFSECGGIDIEENWDKVKTITIPTGASLTFEICAPLVATLPLEIKGELEDFIQVIFTLFEDLDFTFLEMNPFTLVDGKPYPLDMRGELDDTAAFKNFKKWGDIEFPMPFGRVMSSTESFIHGLDEKTSASLKFTVLNPKGRIWTMVAGGGASVIYADTVGDLGYASELGNYAEYSGAPKEDEVLQYARVVIDCATANPDGKSRALVIGGGIANFTDVAATFNGIIRALKEKEAKLKAARMHIFVRRGGPNYQKGLAKMRSLGDEIGVPIEVYGPEATMTGICKEAIQYITAAA.

Asparagine 343, threonine 345, and arginine 376 together coordinate citrate.

This sequence belongs to the succinate/malate CoA ligase beta subunit family. In terms of assembly, heterooctamer of 4 alpha and 4 beta chains.

It is found in the cytoplasm. It localises to the cytosol. It carries out the reaction oxaloacetate + acetyl-CoA + ADP + phosphate = citrate + ATP + CoA. In terms of biological role, ATP citrate-lyase is the primary enzyme responsible for the synthesis of cytosolic acetyl-CoA, used for the elongation of fatty acids and biosynthesis of isoprenoids, flavonoids and malonated derivatives. May supply substrate to the cytosolic acetyl-CoA carboxylase, which generates the malonyl-CoA used for the synthesis of a multitude of compounds, including very long chain fatty acids and flavonoids. Required for normal growth and development and elongation of C18 fatty acids to C20 to C24 fatty acids in seeds. In contrast to all known animal ACL enzymes having a homomeric structure, plant ACLs are composed of alpha and beta chains. This chain is ATP-citrate synthase alpha chain protein 2 (ACLA-2), found in Arabidopsis thaliana (Mouse-ear cress).